A 265-amino-acid polypeptide reads, in one-letter code: Probable esterase tazC (265 aa).

Active-site charge relay system residues include S119, D209, and H236.

Belongs to the LovG family.

It functions in the pathway secondary metabolite biosynthesis. In terms of biological role, probable esterase; part of the gene cluster that mediates the biosynthesis of azaterrilone A and other azaphilones, a class of fungal metabolites characterized by a highly oxygenated pyrano-quinone bicyclic core and exhibiting a broad range of bioactivities. The first step of the pathway begins with the non-reducing polyketide synthase tazA that assembles one acetyl-CoA starter unit, five malonyl-CoA units, and catalyzes a series of Claisen condensations, methylation, PT-mediated cyclization, and finally releases the first hexaketide precursor through the R-domain. The tazA product then undergoes reduction on its terminal ketone and the following pyran-ring formation by yet undetermined enzyme(s). Dehydration and enoyl reduction, possibly involving the trans-enoyl reductase tazE leads to the next intermediate. TazD is predicted as an acetyltransferase and might catalyze the acetylation steps leading to the synthesis of azaterrilone A. Azaterrilone A is not the final product of the taz pathway and both the highly reducing polyketide synthase tazB and the dual enzyme tazHJ catalyze late steps of the pathway, leading to the production of the 2 final stereoisomers that contain additional polyketide modification whose structures have still to be determined. The polypeptide is Probable esterase tazC (Aspergillus terreus (strain NIH 2624 / FGSC A1156)).